Here is a 130-residue protein sequence, read N- to C-terminus: Succinate dehydrogenase assembly factor 3, mitochondrial (130 aa).

The N-terminal 8 residues, 1 to 8 (MRPSLLRL), are a transit peptide targeting the mitochondrion.

This sequence belongs to the complex I LYR family. SDHAF3 subfamily. In terms of assembly, interacts with the iron-sulfur protein subunit within the SDH catalytic dimer.

The protein resides in the mitochondrion matrix. Its function is as follows. Plays an essential role in the assembly of succinate dehydrogenase (SDH), an enzyme complex (also referred to as respiratory complex II) that is a component of both the tricarboxylic acid (TCA) cycle and the mitochondrial electron transport chain, and which couples the oxidation of succinate to fumarate with the reduction of ubiquinone (coenzyme Q) to ubiquinol. Promotes maturation of the iron-sulfur protein subunit of the SDH catalytic dimer, protecting it from the deleterious effects of oxidants. May act together with SDHAF1. The sequence is that of Succinate dehydrogenase assembly factor 3, mitochondrial from Gibberella zeae (strain ATCC MYA-4620 / CBS 123657 / FGSC 9075 / NRRL 31084 / PH-1) (Wheat head blight fungus).